The primary structure comprises 241 residues: Carboxy-S-adenosyl-L-methionine synthase (241 aa).

S-adenosyl-L-methionine-binding positions include tyrosine 38, 63-65 (GCS), 88-89 (DN), 116-117 (DI), asparagine 131, and arginine 198.

This sequence belongs to the class I-like SAM-binding methyltransferase superfamily. Cx-SAM synthase family. As to quaternary structure, homodimer.

It catalyses the reaction prephenate + S-adenosyl-L-methionine = carboxy-S-adenosyl-L-methionine + 3-phenylpyruvate + H2O. In terms of biological role, catalyzes the conversion of S-adenosyl-L-methionine (SAM) to carboxy-S-adenosyl-L-methionine (Cx-SAM). The chain is Carboxy-S-adenosyl-L-methionine synthase from Mannheimia succiniciproducens (strain KCTC 0769BP / MBEL55E).